A 525-amino-acid polypeptide reads, in one-letter code: Protein nucleotidyltransferase YdiU (525 aa).

ATP contacts are provided by glycine 107, glycine 109, arginine 110, lysine 129, aspartate 141, glycine 142, arginine 192, and arginine 199. The active-site Proton acceptor is the aspartate 268. Mg(2+) is bound by residues asparagine 269 and aspartate 278. Position 278 (aspartate 278) interacts with ATP.

Belongs to the SELO family. It depends on Mg(2+) as a cofactor. Requires Mn(2+) as cofactor.

The enzyme catalyses L-seryl-[protein] + ATP = 3-O-(5'-adenylyl)-L-seryl-[protein] + diphosphate. It catalyses the reaction L-threonyl-[protein] + ATP = 3-O-(5'-adenylyl)-L-threonyl-[protein] + diphosphate. The catalysed reaction is L-tyrosyl-[protein] + ATP = O-(5'-adenylyl)-L-tyrosyl-[protein] + diphosphate. It carries out the reaction L-histidyl-[protein] + UTP = N(tele)-(5'-uridylyl)-L-histidyl-[protein] + diphosphate. The enzyme catalyses L-seryl-[protein] + UTP = O-(5'-uridylyl)-L-seryl-[protein] + diphosphate. It catalyses the reaction L-tyrosyl-[protein] + UTP = O-(5'-uridylyl)-L-tyrosyl-[protein] + diphosphate. Nucleotidyltransferase involved in the post-translational modification of proteins. It can catalyze the addition of adenosine monophosphate (AMP) or uridine monophosphate (UMP) to a protein, resulting in modifications known as AMPylation and UMPylation. This chain is Protein nucleotidyltransferase YdiU, found in Ralstonia nicotianae (strain ATCC BAA-1114 / GMI1000) (Ralstonia solanacearum).